A 396-amino-acid chain; its full sequence is Putative nickel insertion protein (396 aa).

The protein belongs to the LarC family.

This is Putative nickel insertion protein from Methanosarcina acetivorans (strain ATCC 35395 / DSM 2834 / JCM 12185 / C2A).